The primary structure comprises 226 residues: PKHD-type hydroxylase Nwi_0701 (226 aa).

A Fe2OG dioxygenase domain is found at 78–178; the sequence is KVLPPRFNRY…RLAAFFWTQS (101 aa). The Fe cation site is built by His96, Asp98, and His159. Arg169 lines the 2-oxoglutarate pocket.

It depends on Fe(2+) as a cofactor. Requires L-ascorbate as cofactor.

The chain is PKHD-type hydroxylase Nwi_0701 from Nitrobacter winogradskyi (strain ATCC 25391 / DSM 10237 / CIP 104748 / NCIMB 11846 / Nb-255).